Consider the following 388-residue polypeptide: Pepsin A (388 aa).

Residues methionine 1 to cysteine 15 form the signal peptide. Positions isoleucine 16 to leucine 62 are cleaved as a propeptide — activation peptide. Positions tyrosine 76 to alanine 385 constitute a Peptidase A1 domain. Residue aspartate 94 is part of the active site. A disulfide bridge links cysteine 107 with cysteine 112. Serine 130 carries the post-translational modification Phosphoserine. Cysteines 268 and 272 form a disulfide. Aspartate 277 is an active-site residue. Cysteine 311 and cysteine 344 are joined by a disulfide.

The protein belongs to the peptidase A1 family.

The protein resides in the secreted. The catalysed reaction is Preferential cleavage: hydrophobic, preferably aromatic, residues in P1 and P1' positions. Cleaves 1-Phe-|-Val-2, 4-Gln-|-His-5, 13-Glu-|-Ala-14, 14-Ala-|-Leu-15, 15-Leu-|-Tyr-16, 16-Tyr-|-Leu-17, 23-Gly-|-Phe-24, 24-Phe-|-Phe-25 and 25-Phe-|-Tyr-26 bonds in the B chain of insulin.. Its function is as follows. Shows particularly broad specificity; although bonds involving phenylalanine and leucine are preferred, many others are also cleaved to some extent. The polypeptide is Pepsin A (PGA) (Macaca mulatta (Rhesus macaque)).